Reading from the N-terminus, the 209-residue chain is Phosphopantothenoylcysteine decarboxylase (209 aa).

FMN contacts are provided by residues 28–30 (GSV) and 53–55 (TKS). H90 serves as the catalytic Proton donor. FMN-binding positions include 106–109 (SANT) and A140. N142, R172, and A174 together coordinate N-[(R)-4-phosphopantothenoyl]-L-cysteine. C175 acts as the Proton donor in catalysis. M183 contacts N-[(R)-4-phosphopantothenoyl]-L-cysteine.

The protein belongs to the HFCD (homooligomeric flavin containing Cys decarboxylase) superfamily. As to quaternary structure, homotrimer. Requires FMN as cofactor. As to expression, expressed in roots, shoots, leaves, flowers, developing siliques and seeds with highest expression in seed embryos and phloem.

The catalysed reaction is N-[(R)-4-phosphopantothenoyl]-L-cysteine + H(+) = (R)-4'-phosphopantetheine + CO2. Its pathway is cofactor biosynthesis; coenzyme A biosynthesis; CoA from (R)-pantothenate: step 3/5. Its function is as follows. Involved in plant growth, and salt and osmotic tolerance. Catalyzes the decarboxylation of 4'-phosphopantothenoylcysteine to 4'-phosphopantetheine, a key step in coenzyme A biosynthesis. The enzyme is also able to decarboxylate pantothenoylcysteine to pantothenoylcysteamine. This Arabidopsis thaliana (Mouse-ear cress) protein is Phosphopantothenoylcysteine decarboxylase.